The sequence spans 1145 residues: MQFHLIRKYASKVSREHYASSSVKIFRRVKPPQKVNKPKKPENVENGPTEYAENLVKVQMISRNLHAQLFPQAPRSISEQQVASAKVYKDELRRHGVDIESSAPVSDVQLKLPALRGANIEEHFHNIAKEQVQPYEELLLPLVQCEQLPKRPKRWAFHTGWTAYDPEDGTATPVDHPLEKGLVFDVEVCVSEGQAPVLATAVSTKRWYSWVSSKLTKHRLSVEKLEPLDVDTDSERPHYTTDELIPLGTTGPGLVVGHNVSYDRARLKEQYLTEDTGTRFVDTMSLHMCVSGVTSYQRAMLKSKKEPAAEDLGWLEQSSLNSLVEVHRLYCGGDTLSKEPRNIFVEGTLEQVRQSFQSLTNYCASDVEATHRILRVLYPLYAERFPHPASLAGMLEMGSAYLPVNSNWERYIREAQLTYEDLSIEAKYHLGRRAEEACSLLLDDQYRQNLWLWDEDWSVQELKLKQPPKRKPLPTVELKDSGNTPEERRLQAKFQHLYDQQALLPARRPLLPGYPLWYRKLCRKPPAKRADEILEDDEEPWSPGASEISTGMQIAPKLLSLCWEGYPLHYEREQGWGFLVPFRSDSEGVDRLPMEQLLAHCPVPEFARLSASKAESDMAFDMLPGQVEQHLGKREHYKKLSQKQQRLETQYQGSGVWCNKVLDDCCFFLKLPHKNGPSFRVGNPLSKDFLNKFAENVLSSGDPSCQAAARVIDIARMMSYWRNNRDRIMGQMVVWLDSQQLPNEFTGEKCQPIAYGAICPQVVACGTLTRRAMEPTWMTASNSRPDRLGSELRSMVQAPPGYRLVGADVDSQELWIASVLGDAYACGEHGATPLGWMTLSGSKSNGSDMHSITAKAVGISRDHAKVINYARIYGAGQLFAETLLRQFNPTFSASEAKAKAMKMFSITKGKRVYRLREEFHDELEDRAYSSYEASRLAIQRNRTLAEVFHRPNWQGGTESAMFNRLEEIATGSQPRTPFLGGRLSRALEADTGPEQEQRFLPTRINWVVQSGAVDFLHLMLVSMRWLMGSHVRFCLSFHDELRYLVKEELSPKAALAMHITNLMTRSFCVSRIGLQDLPMSVAFFSSVEVDTVLRKECTMDCKTPSNPHGLRIGYGIQPGQSLSVAEAIEKAGGNDVSQWDWIKKS.

The transit peptide at 1 to 9 (MQFHLIRKY) directs the protein to the mitochondrion.

This sequence belongs to the DNA polymerase type-A family. In terms of assembly, component of the DNA polymerase gamma complex consisting of two subunits: the catalytic subunit DNApol-gamma/DNApolG1 and the accessory subunit PolG2/DNApol-gamma35. It depends on Mg(2+) as a cofactor.

Its subcellular location is the mitochondrion. The enzyme catalyses DNA(n) + a 2'-deoxyribonucleoside 5'-triphosphate = DNA(n+1) + diphosphate. Its activity is regulated as follows. Stimulated by KCl, and inhibited by the small molecules o 2',3'-dideoxythymidine 5'-triphosphate (d2TTP) and N-ethylmaleimide (NEM). Its function is as follows. As the catalytic component of the DNA polymerase gamma complex is involved in the replication of mitochondrial DNA (mtDNA). Has both 5'-3' DNA polymerase and a highly mispair-specific 3'-5' exonuclease activity. At the end of mtDNA replication DNA ends are ligated to produce a closed circular mtDNA molecule, its exonuclease activity is required for formation of these ligatable ends by preventing DNA synthesis from continuing past the 5'-end of downstream DNA into duplex DNA regions. Does not possess DNA primase activity, does not catalyze strand displacement synthesis and does not contain a 5'-3' exonuclease activity to catalyze nick translation. Important for promoting the elimination of paternal mitochondrial DNA during spermatogenesis, however its exact role in this function has not yet been identified and appears to be independent of its 3'-5'-exonuclease activity and only partially dependent on its DNA polymerase activity. This Drosophila melanogaster (Fruit fly) protein is DNA polymerase subunit gamma-1, mitochondrial.